The primary structure comprises 388 residues: Zinc finger protein 1 (388 aa).

The span at 1-19 (MSSIPNINWNDPNNGKSNT) shows a compositional bias: polar residues. Disordered regions lie at residues 1–120 (MSSI…QQPL), 157–219 (LQQR…QQWD), and 236–311 (SSIQ…KPIT). Over residues 20–38 (SRQSQPQPQLPSNVSPPNS) the composition is skewed to low complexity. 2 stretches are compositionally biased toward polar residues: residues 52 to 67 (YGSS…NPNT) and 88 to 97 (YPVQQTAQQR). Low complexity-rich tracts occupy residues 102–120 (LQQV…QQPL) and 157–172 (LQQR…KSQL). Positions 173–203 (NEQNAMMSASTQQYPVQDFTNPYPNAQNPAE) are enriched in polar residues. Low complexity-rich tracts occupy residues 204-217 (QQQQ…QSQQ) and 236-259 (SSIQ…KQQQ). A compositionally biased stretch (basic residues) spans 268–278 (KKKPGRKPKLR). The segment covering 282–294 (ESSSETPQVPKTA) has biased composition (polar residues). Residues 318–345 (CLTCRQRKKRCCETRPRCTECTRLRLNC) constitute a DNA-binding region (zn(2)-C6 fungal-type). The tract at residues 348–367 (PKPGTEHKNKPKDQKDDENT) is disordered. Positions 351–367 (GTEHKNKPKDQKDDENT) are enriched in basic and acidic residues.

It is found in the nucleus. Perhaps a regulatory role. May be involved in transcriptional activation. The polypeptide is Zinc finger protein 1 (CZF1) (Candida albicans (strain WO-1) (Yeast)).